The following is a 294-amino-acid chain: Acetaldehyde dehydrogenase (294 aa).

S11 to I14 provides a ligand contact to NAD(+). C126 functions as the Acyl-thioester intermediate in the catalytic mechanism. Residues S157–N165 and N269 each bind NAD(+).

This sequence belongs to the acetaldehyde dehydrogenase family.

The enzyme catalyses acetaldehyde + NAD(+) + CoA = acetyl-CoA + NADH + H(+). This Geobacillus stearothermophilus (Bacillus stearothermophilus) protein is Acetaldehyde dehydrogenase (pheF).